The sequence spans 126 residues: Protein ApaG (126 aa).

Residues 2-126 (SDTQHQVNVR…FRLAVPGALH (125 aa)) form the ApaG domain.

In Pseudomonas paraeruginosa (strain DSM 24068 / PA7) (Pseudomonas aeruginosa (strain PA7)), this protein is Protein ApaG.